The chain runs to 173 residues: MRCPYCGSLDTQVKDSRPTEDNTAIRRRRVCPDCGGRFTTFERVQLRELMVVKRSGRRVPFDRDKLARSVEIALRKRPVETERVERMLSGLVRQLESLGDTEITSETIGEMVMEGLKQIDDVAYVRFASVYRNFREARDFESLLDELQLGERKAEALAKLKRADRTASESEPE.

Residues 3 to 34 fold into a zinc finger; sequence CPYCGSLDTQVKDSRPTEDNTAIRRRRVCPDC. The ATP-cone domain maps to 49 to 139; that stretch reads LMVVKRSGRR…VYRNFREARD (91 aa).

It belongs to the NrdR family. It depends on Zn(2+) as a cofactor.

In terms of biological role, negatively regulates transcription of bacterial ribonucleotide reductase nrd genes and operons by binding to NrdR-boxes. The protein is Transcriptional repressor NrdR of Azorhizobium caulinodans (strain ATCC 43989 / DSM 5975 / JCM 20966 / LMG 6465 / NBRC 14845 / NCIMB 13405 / ORS 571).